The sequence spans 161 residues: uncharacterized protein (161 aa).

Disordered stretches follow at residues methionine 1–phenylalanine 67 and aspartate 80–glutamine 147. Residues asparagine 84–asparagine 126 are compositionally biased toward low complexity. The span at glycine 135–glutamine 147 shows a compositional bias: polar residues.

This is an uncharacterized protein from Dictyostelium discoideum (Social amoeba).